We begin with the raw amino-acid sequence, 429 residues long: Glutamate-1-semialdehyde 2,1-aminomutase (429 aa).

K265 bears the N6-(pyridoxal phosphate)lysine mark.

Belongs to the class-III pyridoxal-phosphate-dependent aminotransferase family. HemL subfamily. In terms of assembly, homodimer. Pyridoxal 5'-phosphate is required as a cofactor.

The protein localises to the cytoplasm. It carries out the reaction (S)-4-amino-5-oxopentanoate = 5-aminolevulinate. The protein operates within porphyrin-containing compound metabolism; protoporphyrin-IX biosynthesis; 5-aminolevulinate from L-glutamyl-tRNA(Glu): step 2/2. The sequence is that of Glutamate-1-semialdehyde 2,1-aminomutase from Legionella pneumophila (strain Lens).